The chain runs to 329 residues: Nuclear pore complex protein NUP35 (329 aa).

Disordered regions lie at residues 48 to 105 (NFGG…GKGK) and 123 to 167 (VSGS…PPRE). A compositionally biased stretch (polar residues) spans 123–139 (VSGSPSWWSQSKAGSST). The region spanning 183 to 264 (LDEEEWVTVY…KPVDPIQKQA (82 aa)) is the RRM Nup35-type domain. Residues 271 to 315 (NQGFMPLPPPSSTRNTARPLSRPQYLQNGSAFSPQPSGGAMASPS) are disordered. The segment covering 282 to 306 (STRNTARPLSRPQYLQNGSAFSPQP) has biased composition (polar residues).

Belongs to the Nup35 family. Part of the nuclear pore complex (NPC). The NPC has an eight-fold symmetrical structure comprising a central transport channel and two rings, the cytoplasmic and nuclear rings, to which eight filaments are attached. The cytoplasmic filaments have loose ends, while the nuclear filaments are joined in a distal ring, forming a nuclear basket. NPCs are highly dynamic in configuration and composition, and can be devided in 3 subcomplexes, the NUP62 subcomplex, the NUP107-160 subcomplex and the NUP93 subcomplex, containing approximately 30 different nucleoporin proteins.

The protein resides in the nucleus. It localises to the nuclear pore complex. This chain is Nuclear pore complex protein NUP35, found in Arabidopsis thaliana (Mouse-ear cress).